A 154-amino-acid chain; its full sequence is IQ domain-containing protein F3 (154 aa).

Residues 89 to 118 (QEQATVKLQSCIRMWQCRQCYRQMCNALCL) enclose the IQ domain.

The chain is IQ domain-containing protein F3 (IQCF3) from Homo sapiens (Human).